The sequence spans 459 residues: MLKIYNSITRQKQEFKPINPGKVGMYVCGVTVYDLCHIGHGRTFVSFDMIVRYLRYAGYEVNFQRNITDIDDKIIKRANENQEDCNTLTDRLIGEMHKDFDALNMKRPDFEPRATLHIAEIIDMVERLLARGHAYVAADGDVLFSVASFPEYGRLSGQNLEQLQAGARVEVDDNKQNPMDFVLWKMSKPGEPTWESPWGPGRPGWHIECSAMNSKHLGLHFDIHGGGSDLQFPHHENEIAQSCCAHDTPYVNYWMHTGMVMIDREKMSKSLGNFFTIRDVLSHYDAETVRYFLLSGHYRSQINYSEENLKQARAALERLYTAIKDVDLTVAAAPAEEFVAKFKAAMDDDFNTPEAYSVLFDMVREINRLKLTDMAEASALAVSMKQLADVLGLLHQSPDAFFKGEGSDDEVAEIEALIVERNRARTEKDWPAADVARNRLNELGVVLEDGPSGTTWRKK.

C28 lines the Zn(2+) pocket. A 'HIGH' region motif is present at residues 30–40 (VTVYDLCHIGH). Positions 209, 234, and 238 each coordinate Zn(2+). A 'KMSKS' region motif is present at residues 266-270 (KMSKS). An ATP-binding site is contributed by K269.

It belongs to the class-I aminoacyl-tRNA synthetase family. As to quaternary structure, monomer. It depends on Zn(2+) as a cofactor.

The protein resides in the cytoplasm. The enzyme catalyses tRNA(Cys) + L-cysteine + ATP = L-cysteinyl-tRNA(Cys) + AMP + diphosphate. The protein is Cysteine--tRNA ligase of Shewanella oneidensis (strain ATCC 700550 / JCM 31522 / CIP 106686 / LMG 19005 / NCIMB 14063 / MR-1).